Reading from the N-terminus, the 60-residue chain is Insect toxin mu-NPTX-Nc1a (60 aa).

A signal peptide spans 1–19 (MIYQVVLLLLVSPAPVSAA).

Post-translationally, contains 4 disulfide bonds. Expressed by the venom gland.

It localises to the secreted. Functionally, insect-specific toxin. Blocks voltage-gated potassium and sodium channels. This chain is Insect toxin mu-NPTX-Nc1a, found in Trichonephila clavata (Joro spider).